A 363-amino-acid polypeptide reads, in one-letter code: Type-2 angiotensin II receptor (363 aa).

Over 1–45 the chain is Extracellular; the sequence is MKDNFSFAATSRNITSSRPFDNLNATGTNESAFNCSHKPSDKHLE. 5 N-linked (GlcNAc...) asparagine glycosylation sites follow: Asn-4, Asn-13, Asn-24, Asn-29, and Asn-34. 2 disulfides stabilise this stretch: Cys-35–Cys-290 and Cys-117–Cys-195. The helical transmembrane segment at 46 to 70 threads the bilayer; sequence AIPVLYYMIFVIGFAVNIVVVSLFC. The Cytoplasmic segment spans residues 71 to 80; that stretch reads CQKGPKKVSS. The chain crosses the membrane as a helical span at residues 81 to 104; sequence IYIFNLALADLLLLATLPLWATYY. Angiotensin II is bound by residues Tyr-103 and Tyr-104. Residues 105–114 are Extracellular-facing; sequence SYRYDWLFGP. A helical transmembrane segment spans residues 115 to 140; that stretch reads VMCKVFGSFLTLNMFASIFFITCMSV. Residues 141–159 lie on the Cytoplasmic side of the membrane; that stretch reads DRYQSVIYPFLSQRRNPWQ. A helical transmembrane segment spans residues 160-181; sequence ASYVVPLVWCMACLSSLPTFYF. Angiotensin II-binding residues include Arg-182, Tyr-204, and Lys-215. The Extracellular segment spans residues 182 to 206; sequence RDVRTIEYLGVNACIMAFPPEKYAQ. Residues 207–232 traverse the membrane as a helical segment; it reads WSAGIALMKNILGFIIPLIFIATCYF. Topologically, residues 233 to 257 are cytoplasmic; that stretch reads GIRKHLLKTNSYGKNRITRDQVLKM. A helical transmembrane segment spans residues 258 to 281; that stretch reads AAAVVLAFIICWLPFHVLTFLDAL. An angiotensin II-binding site is contributed by Asp-279. Residues 282–294 lie on the Extracellular side of the membrane; that stretch reads TWMGIINSCEVIA. A helical transmembrane segment spans residues 295–320; sequence VIDLALPFAILLGFTNSCVNPFLYCF. Residue Asp-297 coordinates angiotensin II. Over 321–363 the chain is Cytoplasmic; the sequence is VGNRFQQKLRSVFRVPITWLQGKRETMSCRKGSSLREMDTFVS. A helix VIII region spans residues 324–333; the sequence is RFQQKLRSVF. Ser-354 carries the phosphoserine; by PKC modification.

It belongs to the G-protein coupled receptor 1 family. In terms of assembly, interacts with MTUS1. In terms of tissue distribution, expressed at highest levels in adrenal gland and uterus.

It localises to the cell membrane. Its function is as follows. Receptor for angiotensin II, a vasoconstricting peptide. Signals primarily via a non-canonical G-protein- and beta-arrestin independent pathways. Cooperates with MTUS1 to inhibit ERK2 activation and cell proliferation. In Mus musculus (Mouse), this protein is Type-2 angiotensin II receptor.